The following is a 171-amino-acid chain: Large ribosomal subunit protein uL10 (171 aa).

The protein belongs to the universal ribosomal protein uL10 family. As to quaternary structure, part of the ribosomal stalk of the 50S ribosomal subunit. The N-terminus interacts with L11 and the large rRNA to form the base of the stalk. The C-terminus forms an elongated spine to which L12 dimers bind in a sequential fashion forming a multimeric L10(L12)X complex.

In terms of biological role, forms part of the ribosomal stalk, playing a central role in the interaction of the ribosome with GTP-bound translation factors. The sequence is that of Large ribosomal subunit protein uL10 from Erythrobacter litoralis (strain HTCC2594).